A 388-amino-acid polypeptide reads, in one-letter code: S-adenosylmethionine synthase 1 (388 aa).

Residue Glu-11 participates in Mg(2+) binding. His-17 is a binding site for ATP. K(+) is bound at residue Glu-45. Residues Glu-58 and Gln-101 each contribute to the L-methionine site. ATP-binding positions include 168 to 170 (DAK), 233 to 236 (SGRF), Asp-244, 250 to 251 (RK), Ala-267, Lys-271, and Lys-275. Asp-244 is an L-methionine binding site. Position 275 (Lys-275) interacts with L-methionine.

This sequence belongs to the AdoMet synthase family. In terms of assembly, homotetramer. It depends on Mn(2+) as a cofactor. Mg(2+) is required as a cofactor. Co(2+) serves as cofactor. The cofactor is K(+). Mostly in Roots.

Its subcellular location is the cytoplasm. It catalyses the reaction L-methionine + ATP + H2O = S-adenosyl-L-methionine + phosphate + diphosphate. Its pathway is amino-acid biosynthesis; S-adenosyl-L-methionine biosynthesis; S-adenosyl-L-methionine from L-methionine: step 1/1. Its function is as follows. Catalyzes the formation of S-adenosylmethionine from methionine and ATP. The reaction comprises two steps that are both catalyzed by the same enzyme: formation of S-adenosylmethionine (AdoMet) and triphosphate, and subsequent hydrolysis of the triphosphate. The protein is S-adenosylmethionine synthase 1 (SAMS1) of Pinus contorta (Shore pine).